We begin with the raw amino-acid sequence, 66 residues long: Beta-mammal toxin Co3 (66 aa).

Positions 1-66 constitute an LCN-type CS-alpha/beta domain; sequence KEGYIVNYYD…VWPLPNKTCN (66 aa). Intrachain disulfides connect cysteine 12–cysteine 65, cysteine 16–cysteine 41, cysteine 25–cysteine 46, and cysteine 29–cysteine 48.

Expressed by the venom gland.

Its subcellular location is the secreted. Functionally, beta toxins bind voltage-independently at site-4 of sodium channels (Nav) and shift the voltage of activation toward more negative potentials thereby affecting sodium channel activation and promoting spontaneous and repetitive firing. This toxin acts on human Nav1.2/SCN2A, Nav1.4/SCN4A and Nav1.6/SCN8A voltage-gated sodium channels. Also, it reduces the peak of sodium currents in Nav1.5/SCN5A at all potentials. In vivo, is lethal to mice when intraperitoneally injected at a dose of 5ug. No activity is observed when injected into crickets or woodlice. The polypeptide is Beta-mammal toxin Co3 (Centruroides ornatus (Scorpion)).